We begin with the raw amino-acid sequence, 28 residues long: Conotoxin Cl9b (28 aa).

4-hydroxyproline occurs at positions 17 and 28.

Contains 3 disulfide bonds. Expressed by the venom duct.

It localises to the secreted. This is Conotoxin Cl9b from Californiconus californicus (California cone).